Reading from the N-terminus, the 116-residue chain is Large ribosomal subunit protein bL17 (116 aa).

The protein belongs to the bacterial ribosomal protein bL17 family. In terms of assembly, part of the 50S ribosomal subunit. Contacts protein L32.

In Picosynechococcus sp. (strain ATCC 27264 / PCC 7002 / PR-6) (Agmenellum quadruplicatum), this protein is Large ribosomal subunit protein bL17.